A 197-amino-acid chain; its full sequence is Segregation and condensation protein B (197 aa).

This sequence belongs to the ScpB family. Homodimer. Homodimerization may be required to stabilize the binding of ScpA to the Smc head domains. Component of a cohesin-like complex composed of ScpA, ScpB and the Smc homodimer, in which ScpA and ScpB bind to the head domain of Smc. The presence of the three proteins is required for the association of the complex with DNA.

Its subcellular location is the cytoplasm. Functionally, participates in chromosomal partition during cell division. May act via the formation of a condensin-like complex containing Smc and ScpA that pull DNA away from mid-cell into both cell halves. This is Segregation and condensation protein B from Malacoplasma penetrans (strain HF-2) (Mycoplasma penetrans).